Consider the following 150-residue polypeptide: FCS-Like Zinc finger 15 (150 aa).

Positions 12–28 (NNNNNNNNNNNNNNNKN) are enriched in low complexity. Positions 12-31 (NNNNNNNNNNNNNNNKNPLS) are disordered. The FLZ-type zinc finger occupies 67 to 111 (GFLEHCFLCRRKLLPAKDIYMYKGDRAFCSVECRSKQMIMDEEES). The interval 129-150 (SPATAPSRYRRDPRNQAGGFAY) is disordered.

The protein belongs to the FLZ family. Interacts with KIN10 and KIN11 via its FLZ-type zinc finger domain. Interacts with KINB1 and KINB3 via its N-terminal part. Forms homodimer and heterodimer with FLZ1, FLZ2 and FLZ7 in vitro.

Its subcellular location is the cytoplasm. The protein resides in the P-body. Functionally, may act as an adapter to facilitate the interaction of SnRK1 complex with effector proteins, conferring tissue- and stimulus-type specific differences in the SnRK1 regulation pathway. The sequence is that of FCS-Like Zinc finger 15 from Arabidopsis thaliana (Mouse-ear cress).